The sequence spans 100 residues: Urease subunit gamma (100 aa).

Belongs to the urease gamma subunit family. In terms of assembly, heterotrimer of UreA (gamma), UreB (beta) and UreC (alpha) subunits. Three heterotrimers associate to form the active enzyme.

The protein resides in the cytoplasm. The catalysed reaction is urea + 2 H2O + H(+) = hydrogencarbonate + 2 NH4(+). It participates in nitrogen metabolism; urea degradation; CO(2) and NH(3) from urea (urease route): step 1/1. The polypeptide is Urease subunit gamma (Verminephrobacter eiseniae (strain EF01-2)).